We begin with the raw amino-acid sequence, 351 residues long: Terpene cyclase sdgD (351 aa).

Transmembrane regions (helical) follow at residues 7 to 27 (INFI…TILI), 62 to 82 (TGVP…WPVI), 89 to 109 (LSLL…LLLL), 126 to 146 (WVGL…YCAI), 160 to 180 (IPHV…LVAL), 193 to 213 (VVVA…FMAS), 229 to 249 (IYIF…LASL), 281 to 301 (FLQW…VAVY), and 316 to 336 (LEVC…LLIW).

This sequence belongs to the membrane-bound ascI terpene cyclase family.

The protein localises to the membrane. The protein operates within secondary metabolite biosynthesis. Epoxide hydrolase; part of the gene cluster that mediates the biosynthesis of the polyenes aspernidgulenes. The carbon backbone of aspernidgulenes is synthesized by the HR-PKS sdgA, which accepts acetyl-CoA as the starter unit and performs malonyl-CoA extensions as well as regioselective methylation and reduction. The resulting nonaketide offloads the HR-PKS by intramolecular lactonization to yield the 5,6-dihydro-alpha-pyrone-containing hexaenoic acids preaspernidgulene A1 and A2. The FAD-dependent monooxygenase sdgC then installs the first epoxide on the penultimate double bond. Subsequently, the FAD-dependent monooxygenase sdgF presumably generates a ketone intermediate through Meinwald rearrangement involving a hydride shift. Next, sdgC introduces another epoxide on the last olefin of the ketone intermediate after E/Z isomerization. The epoxide hydrolase sdgD then catalyzes stereospecific cyclization of the 5,6-dihydro-alpha-pyrone and opening of the epoxide ring to form an oxygenated trimethylcyclopentanone and an oxabicyclo[2.2.1]heptane unit. Finally, the bicyclic unit undergoes hydrolytic cleavage, either spontaneously or catalyzed by sdgD, to assemble the dimethyl-gamma-lactone moiety in aspernidgulene A1. This is Terpene cyclase sdgD from Emericella nidulans (strain FGSC A4 / ATCC 38163 / CBS 112.46 / NRRL 194 / M139) (Aspergillus nidulans).